Reading from the N-terminus, the 93-residue chain is Putative regulatory protein LBL_1834 (93 aa).

This sequence belongs to the RemA family.

The protein is Putative regulatory protein LBL_1834 of Leptospira borgpetersenii serovar Hardjo-bovis (strain L550).